Reading from the N-terminus, the 127-residue chain is Fluoride-specific ion channel FluC (127 aa).

The next 4 helical transmembrane spans lie at 4 to 24 (LLLA…LLSM), 35 to 55 (LGTL…FAWF), 71 to 91 (TGFC…VFLL), and 103 to 123 (VFVN…LFSA). 2 residues coordinate Na(+): Gly75 and Thr78.

This sequence belongs to the fluoride channel Fluc/FEX (TC 1.A.43) family.

The protein resides in the cell inner membrane. It catalyses the reaction fluoride(in) = fluoride(out). With respect to regulation, na(+) is not transported, but it plays an essential structural role and its presence is essential for fluoride channel function. Functionally, fluoride-specific ion channel. Important for reducing fluoride concentration in the cell, thus reducing its toxicity. This chain is Fluoride-specific ion channel FluC, found in Escherichia coli O17:K52:H18 (strain UMN026 / ExPEC).